The chain runs to 70 residues: Fumarase D (70 aa).

The protein belongs to the FumD family.

The catalysed reaction is (S)-malate = fumarate + H2O. Its function is as follows. In vitro catalyzes the addition of water to fumarate, forming malate. Cannot catalyze the reverse reaction. Cannot use the cis-isomer maleate as substrate. The protein is Fumarase D of Salmonella typhi.